The primary structure comprises 477 residues: MNLLDPFMKMTEEQDKCMSGAPSPTMSDDSAGSPCPSGSGSDTENTRPQENTFPKGDQELKKETEDEKFPVCIREAVSQVLKGYDWTLVPMPVRVNGSSKNKPHVKRPMNAFMVWAQAARRKLADQYPHLHNAELSKTLGKLWRLLNEGEKRPFVEEAERLRVQHKKDHPDYKYQPRRRKSVKNGQTEQEDGAEQTHISPNAIFKALQADSPHSSSSMSEVHSPGEHSGQSQGPPTPPTTPKTDIQPGKPDLKREGRPLQENGRQPPHIDFRDVDIGELSSEVISTIETFDVNEFDQYLPPNGHPGVGSTQASYTGSYGISSTPSATTGAGPAWMSKQQQQQPQQHSLSTLNSEQSQSQQRTHIKTEQLSPSHYSDQQQQHSPQQLNYSSFNLQHYSSSYPTITRAQYDYTEHQGSSTYYSHASGQNSGLYSTFSYMNPSQRPLYTPIADTTGVPSIPQTHSPQHWEQPVYTQLTRP.

2 disordered regions span residues 1-66 and 157-274; these read MNLL…ETED and EAER…FRDV. Residues 27 to 42 show a composition bias toward low complexity; that stretch reads SDDSAGSPCPSGSGSD. Basic and acidic residues-rich tracts occupy residues 56 to 66 and 157 to 174; these read GDQELKKETED and EAER…DYKY. A Glycyl lysine isopeptide (Lys-Gly) (interchain with G-Cter in SUMO) cross-link involves residue K61. The segment at 63-103 is dimerization (DIM); the sequence is ETEDEKFPVCIREAVSQVLKGYDWTLVPMPVRVNGSSKNKP. The PQA stretch occupies residues 63-103; the sequence is ETEDEKFPVCIREAVSQVLKGYDWTLVPMPVRVNGSSKNKP. A DNA-binding region (HMG box) is located at residues 105-173; sequence VKRPMNAFMV…QHKKDHPDYK (69 aa). Over residues 211-222 the composition is skewed to low complexity; it reads SPHSSSSMSEVH. A transactivation domain (TAM) region spans residues 224–308; sequence PGEHSGQSQG…LPPNGHPGVG (85 aa). Short sequence motifs (9aaTAD) lie at residues 276 to 285 and 291 to 299; these read IGELSSEVIS and DVNEFDQYL. Residues 301-384 are disordered; the sequence is PNGHPGVGST…SDQQQQHSPQ (84 aa). Composition is skewed to polar residues over residues 308–328 and 346–361; these read GSTQ…SATT and HSLS…SQQR. The segment at 361-477 is transactivation domain (TAC); the sequence is RTHIKTEQLS…QPVYTQLTRP (117 aa). K365 is covalently cross-linked (Glycyl lysine isopeptide (Lys-Gly) (interchain with G-Cter in SUMO)). The segment covering 370–384 has biased composition (low complexity); it reads SPSHYSDQQQQHSPQ. A 9aaTAD 3 motif is present at residues 428-436; the sequence is SGLYSTFSY. Residues 446–477 are disordered; the sequence is TPIADTTGVPSIPQTHSPQHWEQPVYTQLTRP. Residues 453 to 477 are compositionally biased toward polar residues; that stretch reads GVPSIPQTHSPQHWEQPVYTQLTRP.

As to quaternary structure, interacts with the sumoylation factors ube2i/ubc9 and sumo1. Post-translationally, sumoylated. Lys-365 is the major site of sumoylation, although sumoylation at Lys-61 also occurs. Sumoylation plays a key role in regulating formation of the neural crest and otic placode. As to expression, from mid-gastrula (stage 10.5-11), expressed in a ring around the blastopore, with expression decreasing toward the dorsal side. At stage 12, expression around the blastopore decreases and begins to increase lateral to the neural plate in the presumptive neural crest, where expression dramatically increases around stage 14. Also expressed in the otic placode as early as stage 13/14. By the tailbud stage expression is restricted to the otic cup and then throughout the otic vesicle, with more intense staining at the dorsal-most region, the prospective region of the semicircular canals and endolymphatic duct. At the early tailbud stage (stage 23), expressed in migrating cranial neural crest cells and in the trunk neural crest. Also expressed in the genital ridges, developing eye, nasal placode and prospective pineal gland. Around stage 25, expression is down-regulated in the trunk neural crest but persists in the migrating cranial crest cells as they populate the pharyngeal arches, otic placode, developing eye, genital ridges and notochord. By stage 31, expression remains strong in the pharyngeal arches. Also expressed in the pancreas; first expressed at stage 25 in the pancreatic anlagen, dorsally in diverticulum. As development proceeds, expression continues in pancreatic tissue, being restricted to ventral and dorsal pancreatic buds.

Its subcellular location is the nucleus. It is found in the cytoplasm. In terms of biological role, transcription factor that plays a key role in chondrocytes differentiation and skeletal development. Specifically binds the 5'-ACAAAG-3' DNA motif present in enhancers and super-enhancers and promotes expression of genes important for chondrogenesis, including COL2A1. Plays a central role in successive steps of chondrocyte differentiation. Absolutely required for precartilaginous condensation, the first step in chondrogenesis during which skeletal progenitors differentiate into prechondrocytes. Together with SOX5 and SOX6, required for overt chondrogenesis when condensed prechondrocytes differentiate into early stage chondrocytes, the second step in chondrogenesis. Later, required to direct hypertrophic maturation and block osteoblast differentiation of growth plate chondrocytes: maintains chondrocyte columnar proliferation, delays prehypertrophy and then prevents osteoblastic differentiation of chondrocytes. Also required for chondrocyte hypertrophy, both indirectly, by keeping the lineage fate of chondrocytes, and directly, by remaining present in upper hypertrophic cells. Low lipid levels are the main nutritional determinant for chondrogenic commitment of skeletal progenitor cells: when lipids levels are low, FOXO transcription factors promote expression of SOX9, which induces chondrogenic commitment and suppresses fatty acid oxidation. In addition to cartilage development, also acts as a regulator of proliferation and differentiation in epithelial stem/progenitor cells. Involved in development of the cranial neural crest, which is fated to form skeletal elements. Also required for otic placode specification during inner ear development. This chain is Transcription factor Sox-9-A (sox9-a), found in Xenopus laevis (African clawed frog).